Here is a 469-residue protein sequence, read N- to C-terminus: MYTCAPHFVSIKFPDLHSSKTLRPFGMSKREFKVFALASSVNEASNYIPAAPILIPEGPWNQIPGGVTAAKGFKAVGIYGGLRAKGEKPDLALVTCDVDAAAAGSFTTNMVAAAPVLYCKHALDISQTARAVLINAGQANAATGDAGYQDVLECADTVAMMLKVKREEVLIESTGVIGQRIKKDALLNALPTLVNSLTSSVEGAGSAAVAITTTDLVSKSVAIESQIGGINIRVGGMAKGSGMIHPNMATMLGVITTDALVQTDVWRKMVQTAVNRSFNQITVDGDTSTNDTVIALASGLSGSMSISSIDCTRAIQLQACLDAVMQGLAKSIAWDGEGATCLIEVTVAGTESEVKAAKIARSVASSSLVKAAVYGRDPNWGRIAAAAGYAGIPFHQNKLRILLGDILLMDNGQPLAFDRPAASKYLKMAGETHGTVKIYISVGDGSGIGKAWGCDLSYDYVKINAEYTT.

Positions 213, 239, 250, 337, 464, and 469 each coordinate substrate. Thr250 serves as the catalytic Nucleophile.

This sequence belongs to the ArgJ family. Heterodimer of an alpha and a beta chain.

Its subcellular location is the plastid. It is found in the chloroplast. It carries out the reaction N(2)-acetyl-L-ornithine + L-glutamate = N-acetyl-L-glutamate + L-ornithine. The enzyme catalyses L-glutamate + acetyl-CoA = N-acetyl-L-glutamate + CoA + H(+). Its pathway is amino-acid biosynthesis; L-arginine biosynthesis; L-ornithine and N-acetyl-L-glutamate from L-glutamate and N(2)-acetyl-L-ornithine (cyclic): step 1/1. The protein operates within amino-acid biosynthesis; L-arginine biosynthesis; N(2)-acetyl-L-ornithine from L-glutamate: step 1/4. In terms of biological role, catalyzes two activities which are involved in the cyclic version of arginine biosynthesis: the synthesis of acetylglutamate from glutamate and acetyl-CoA, and of ornithine by transacetylation between acetylornithine and glutamate. This chain is Arginine biosynthesis bifunctional protein ArgJ, chloroplastic, found in Ricinus communis (Castor bean).